A 259-amino-acid chain; its full sequence is Phosphatidylserine decarboxylase proenzyme (259 aa).

Serine 183 functions as the Schiff-base intermediate with substrate; via pyruvic acid in the catalytic mechanism. At serine 183 the chain carries Pyruvic acid (Ser); by autocatalysis.

It belongs to the phosphatidylserine decarboxylase family. PSD-A subfamily. As to quaternary structure, heterodimer of a large membrane-associated beta subunit and a small pyruvoyl-containing alpha subunit. Pyruvate serves as cofactor. Post-translationally, is synthesized initially as an inactive proenzyme. Formation of the active enzyme involves a self-maturation process in which the active site pyruvoyl group is generated from an internal serine residue via an autocatalytic post-translational modification. Two non-identical subunits are generated from the proenzyme in this reaction, and the pyruvate is formed at the N-terminus of the alpha chain, which is derived from the carboxyl end of the proenzyme. The post-translation cleavage follows an unusual pathway, termed non-hydrolytic serinolysis, in which the side chain hydroxyl group of the serine supplies its oxygen atom to form the C-terminus of the beta chain, while the remainder of the serine residue undergoes an oxidative deamination to produce ammonia and the pyruvoyl prosthetic group on the alpha chain.

It is found in the cell membrane. It carries out the reaction a 1,2-diacyl-sn-glycero-3-phospho-L-serine + H(+) = a 1,2-diacyl-sn-glycero-3-phosphoethanolamine + CO2. It functions in the pathway phospholipid metabolism; phosphatidylethanolamine biosynthesis; phosphatidylethanolamine from CDP-diacylglycerol: step 2/2. Catalyzes the formation of phosphatidylethanolamine (PtdEtn) from phosphatidylserine (PtdSer). This is Phosphatidylserine decarboxylase proenzyme from Neisseria gonorrhoeae (strain ATCC 700825 / FA 1090).